The sequence spans 275 residues: Elongation factor Ts (275 aa).

The tract at residues 76–79 is involved in Mg(2+) ion dislocation from EF-Tu; sequence TDFV.

This sequence belongs to the EF-Ts family.

It is found in the cytoplasm. In terms of biological role, associates with the EF-Tu.GDP complex and induces the exchange of GDP to GTP. It remains bound to the aminoacyl-tRNA.EF-Tu.GTP complex up to the GTP hydrolysis stage on the ribosome. The polypeptide is Elongation factor Ts (Rhodococcus erythropolis (strain PR4 / NBRC 100887)).